We begin with the raw amino-acid sequence, 414 residues long: Histidine--tRNA ligase (414 aa).

Belongs to the class-II aminoacyl-tRNA synthetase family. As to quaternary structure, homodimer.

It is found in the cytoplasm. The catalysed reaction is tRNA(His) + L-histidine + ATP = L-histidyl-tRNA(His) + AMP + diphosphate + H(+). The sequence is that of Histidine--tRNA ligase from Synechococcus sp. (strain RCC307).